A 97-amino-acid chain; its full sequence is Theromacin (97 aa).

The first 22 residues, 1–22 (MELKSGLSILLCFGICIAVINA), serve as a signal peptide directing secretion. Cystine bridges form between cysteine 24–cysteine 31, cysteine 46–cysteine 50, cysteine 53–cysteine 95, cysteine 61–cysteine 69, and cysteine 79–cysteine 81.

Coelomic liquid (at protein level). Expressed in large fat cells in contact with coelomic cavities, in intestinal epithelia and at the epidermis level.

It localises to the secreted. Its function is as follows. Has a bactericidal activity. Active against M.luteus. No activity toward E.coli and F.oxysporum. The chain is Theromacin from Theromyzon tessulatum (Duck leech).